We begin with the raw amino-acid sequence, 84 residues long: Cytochrome b559 subunit alpha (84 aa).

A helical membrane pass occupies residues 22–36; it reads IIHSITIPSLFVSGW. Position 24 (histidine 24) interacts with heme.

Belongs to the PsbE/PsbF family. Heterodimer of an alpha subunit and a beta subunit. PSII is composed of 1 copy each of membrane proteins PsbA, PsbB, PsbC, PsbD, PsbE, PsbF, PsbH, PsbI, PsbJ, PsbK, PsbL, PsbM, PsbT, PsbX, PsbY, PsbZ, Psb30/Ycf12, at least 3 peripheral proteins of the oxygen-evolving complex and a large number of cofactors. It forms dimeric complexes. The cofactor is heme b.

It localises to the plastid. Its subcellular location is the chloroplast thylakoid membrane. Its function is as follows. This b-type cytochrome is tightly associated with the reaction center of photosystem II (PSII). PSII is a light-driven water:plastoquinone oxidoreductase that uses light energy to abstract electrons from H(2)O, generating O(2) and a proton gradient subsequently used for ATP formation. It consists of a core antenna complex that captures photons, and an electron transfer chain that converts photonic excitation into a charge separation. The protein is Cytochrome b559 subunit alpha of Phaeodactylum tricornutum (strain CCAP 1055/1).